Reading from the N-terminus, the 106-residue chain is Large ribosomal subunit protein uL24 (106 aa).

It belongs to the universal ribosomal protein uL24 family. In terms of assembly, part of the 50S ribosomal subunit.

Functionally, one of two assembly initiator proteins, it binds directly to the 5'-end of the 23S rRNA, where it nucleates assembly of the 50S subunit. Its function is as follows. One of the proteins that surrounds the polypeptide exit tunnel on the outside of the subunit. The chain is Large ribosomal subunit protein uL24 from Syntrophus aciditrophicus (strain SB).